We begin with the raw amino-acid sequence, 532 residues long: BEL1-like homeodomain protein 6 (532 aa).

The tract at residues 144 to 160 (SKYLKAAQQLLDEAVNV) is SR/KY domain. Residues 170–203 (EGDKNNENPQEPNQSTQDSSTNPPADISQSERQE) form a disordered region. Positions 176–197 (ENPQEPNQSTQDSSTNPPADIS) are enriched in polar residues. The BELL domain stretch occupies residues 200 to 271 (ERQEMQSKLT…SLRDAISGQI (72 aa)). Residues 314–376 (AWRPQRGLPE…NARVRLWKPM (63 aa)) constitute a DNA-binding region (homeobox). Residues 385-434 (FTENDSNSSSENTPKMSEIGPVAADDEDRAREFSQDQTKPDHGHGYGEET) are disordered. Over residues 412 to 434 (DRAREFSQDQTKPDHGHGYGEET) the composition is skewed to basic and acidic residues.

The protein belongs to the TALE/BELL homeobox family. As to quaternary structure, may form heterodimeric complexes with TALE/KNOX proteins. Interacts with OFP2, OFP4, and OFP5.

It is found in the nucleus. In Arabidopsis thaliana (Mouse-ear cress), this protein is BEL1-like homeodomain protein 6 (BLH6).